Consider the following 113-residue polypeptide: Large ribosomal subunit protein bL19 (113 aa).

Belongs to the bacterial ribosomal protein bL19 family.

Functionally, this protein is located at the 30S-50S ribosomal subunit interface and may play a role in the structure and function of the aminoacyl-tRNA binding site. The polypeptide is Large ribosomal subunit protein bL19 (Mycobacterium leprae (strain Br4923)).